The primary structure comprises 603 residues: NADH-ubiquinone oxidoreductase chain 5 (603 aa).

16 helical membrane passes run 4-24 (FTTM…ATLI), 38-58 (TAIA…ICLG), 89-109 (FLPV…WYMA), 122-142 (LIFL…QLFI), 171-191 (AILY…WFLL), 211-233 (LPLL…HPWL), 241-261 (TPVS…FLLI), 273-293 (IQTL…ICAL), 301-320 (IVAF…IGIN), 325-347 (AFLH…GSII), 366-386 (MPLT…MPFL), 405-424 (NAWA…AYST), 457-477 (LMTG…PTSL), 488-508 (LAAL…NYLA), 537-557 (IPHL…DLTW), and 582-602 (GMIK…LLMI).

It belongs to the complex I subunit 5 family. Core subunit of respiratory chain NADH dehydrogenase (Complex I) which is composed of 45 different subunits.

The protein resides in the mitochondrion inner membrane. It carries out the reaction a ubiquinone + NADH + 5 H(+)(in) = a ubiquinol + NAD(+) + 4 H(+)(out). Its function is as follows. Core subunit of the mitochondrial membrane respiratory chain NADH dehydrogenase (Complex I) which catalyzes electron transfer from NADH through the respiratory chain, using ubiquinone as an electron acceptor. Essential for the catalytic activity and assembly of complex I. The polypeptide is NADH-ubiquinone oxidoreductase chain 5 (MT-ND5) (Pongo pygmaeus (Bornean orangutan)).